A 366-amino-acid polypeptide reads, in one-letter code: Cellular tumor antigen p53 (366 aa).

The tract at residues 1–41 is transcription activation (acidic); it reads MMDEQGLDGMQILPGSQDSFSELWASVQTPSIATIAEEFDD. The DNA-binding element occupies 80-267; sequence DYPGEYGFQL…KTDEESSTKT (188 aa). Zn(2+) contacts are provided by Cys-154, His-157, Cys-213, and Cys-217. The segment at 248 to 255 is interaction with DNA; sequence RVCACPGR. Over residues 255 to 264 the composition is skewed to basic and acidic residues; that stretch reads RDRKTDEESS. The segment at 255 to 305 is disordered; it reads RDRKTDEESSTKTPNGPKQTKKRKQAPSNSAPHTTTVMKSKSSSSAEEEDK. The Bipartite nuclear localization signal motif lies at 275–295; sequence KKRKQAPSNSAPHTTTVMKSK. A compositionally biased stretch (polar residues) spans 280 to 292; that stretch reads APSNSAPHTTTVM. An oligomerization region spans residues 305–336; it reads KEVFTVLVKGRERYEIIKKINEAFEGAAEKEK. The Nuclear export signal motif lies at 319-330; the sequence is EIIKKINEAFEG. Residues 332-366 are disordered; sequence AEKEKAKNKVAVKQELPVPSSGKRLVQRGERSDSD. The interval 341-362 is basic (repression of DNA-binding); sequence VAVKQELPVPSSGKRLVQRGER.

This sequence belongs to the p53 family. Binds DNA as a homotetramer. Zn(2+) serves as cofactor.

It is found in the cytoplasm. The protein resides in the nucleus. Multifunctional transcription factor that induces cell cycle arrest, DNA repair or apoptosis upon binding to its target DNA sequence. Acts as a tumor suppressor in many tumor types; induces growth arrest or apoptosis depending on the physiological circumstances and cell type. Negatively regulates cell division by controlling expression of a set of genes required for this process. One of the activated genes is an inhibitor of cyclin-dependent kinases. Apoptosis induction seems to be mediated either by stimulation of BAX and FAS antigen expression, or by repression of Bcl-2 expression. The chain is Cellular tumor antigen p53 (tp53) from Platichthys flesus (European flounder).